A 526-amino-acid chain; its full sequence is Keratin, type I cytoskeletal 10 (526 aa).

Over residues 1 to 15 (MSVRYSSSKQYSSSR) the composition is skewed to low complexity. The tract at residues 1 to 29 (MSVRYSSSKQYSSSRSGGGGGGGSSLRIS) is disordered. Positions 1–126 (MSVRYSSSKQ…FGDGGLISGN (126 aa)) are head. 6 positions are modified to phosphoserine: S14, S16, S34, S45, S48, and S151. Residues 127–162 (QKITMQNLNDRLASYLDKVRALEESNYELEVKIKEW) form a coil 1A region. The IF rod domain occupies 127 to 441 (QKITMQNLND…SLLEGEGSSG (315 aa)). Residues 163-183 (YEKYGNSRQREPRDYSKYYQT) are linker 1. A coil 1B region spans residues 184-275 (IDDLKNQIFN…KNHEEEMRDL (92 aa)). Residues 276–298 (QNVSTGDVNVEMNAAPGVDLTEL) are linker 12. Residues 299–437 (LNNMRSQYEQ…QTYRSLLEGE (139 aa)) are coil 2. The tract at residues 438-526 (GSSGGGSYGG…GESSSKGPRY (89 aa)) is tail. The span at 458-505 (GGGGYGGGSSSGGYGGGSSSGGGHGGSSGGSYGGGSSSGGGHGGGSSS) shows a compositional bias: gly residues. Residues 458-526 (GGGGYGGGSS…GESSSKGPRY (69 aa)) are disordered. Over residues 506 to 526 (GGHKSTTTGSVGESSSKGPRY) the composition is skewed to low complexity.

Belongs to the intermediate filament family. As to quaternary structure, heterotetramer of two type I and two type II keratins. Heterodimer with KRT1. Two heterodimers of KRT1 and KRT10 form a heterotetramer. The KRT10 subunit in the heterotetramer is probably disulfide-linked.

Its subcellular location is the secreted. The protein localises to the extracellular space. It localises to the cell surface. The protein resides in the cytoplasm. Plays a role in the establishment of the epidermal barrier on plantar skin. Involved in the maintenance of cell layer development and keratin filament bundles in suprabasal cells of the epithelium. This Bos taurus (Bovine) protein is Keratin, type I cytoskeletal 10 (KRT10).